Reading from the N-terminus, the 970-residue chain is Sodium/calcium exchanger 1 (970 aa).

Positions 1–32 (MLRLRLSPTFSVGFHLLAFVPLLFSHVDLISA) are cleaved as a signal peptide. Residues 33 to 71 (DTEMEGEGNETGECTGSYYCKKGVILPIWEPQDPSFGDK) lie on the Extracellular side of the membrane. The N-linked (GlcNAc...) asparagine glycan is linked to asparagine 41. Residues 72–92 (IARATVYFVAMVYMFLGVSII) traverse the membrane as a helical segment. The Cytoplasmic segment spans residues 93–133 (ADRFMSSIEVITSQEKEITIKKPNGETTKTTVRIWNETVSN). The helical transmembrane segment at 134-154 (LTLMALGSSAPEILLSVIEVC) threads the bilayer. The stretch at 138–178 (ALGSSAPEILLSVIEVCGHNFTAGDLGPSTIVGSAAFNMFI) is one Alpha-1 repeat. At 155–167 (GHNFTAGDLGPST) the chain is on the extracellular side. Asparagine 157 carries N-linked (GlcNAc...) asparagine glycosylation. Residues 168–188 (IVGSAAFNMFIIIALCVYVVP) traverse the membrane as a helical segment. Topologically, residues 189-201 (DGETRKIKHLRVF) are cytoplasmic. Residues 202-222 (FVTAAWSIFAYTWLYIILSVI) traverse the membrane as a helical segment. Over 223 to 228 (SPGVVE) the chain is Extracellular. Residues 229 to 249 (VWEGLLTFFFFPICVVFAWVA) form a helical membrane-spanning segment. At 250-797 (DRRLLFYKYV…FVPPTEYWNG (548 aa)) the chain is on the cytoplasmic side. Positions 251–270 (RRLLFYKYVYKRYRAGKQRG) are putative calmodulin-binding region. A phosphoserine mark is found at serine 282 and serine 389. Calx-beta domains are found at residues 393–493 (VNTE…VHLS) and 524–624 (ATVT…LEIG). Ca(2+)-binding residues include glutamate 417, aspartate 453, aspartate 478, aspartate 479, isoleucine 481, glutamate 483, glutamate 486, aspartate 530, aspartate 531, aspartate 532, glutamate 548, aspartate 584, aspartate 610, glutamate 611, glutamate 612, and glutamate 715. A helical transmembrane segment spans residues 798–818 (WACFIVSILMIGILTAFIGDL). The Extracellular portion of the chain corresponds to 819-821 (ASH). The helical transmembrane segment at 822 to 842 (FGCTIGLKDSVTAVVFVALGT) threads the bilayer. The stretch at 839–875 (ALGTSVPDTFASKVAATQDQYADASIGNVTGSNAVNV) is one Alpha-2 repeat. Residues 843–871 (SVPDTFASKVAATQDQYADASIGNVTGSN) lie on the Cytoplasmic side of the membrane. The chain crosses the membrane as a helical span at residues 872–892 (AVNVFLGIGVAWSIAAIYHAA). Residues 893-903 (NGEQFKVSPGT) are Extracellular-facing. Residues 904–924 (LAFSVTLFTIFAFINVGVLLY) traverse the membrane as a helical segment. Residues 925–941 (RRRPEIGGELGGPRTAK) are Cytoplasmic-facing. A helical membrane pass occupies residues 942-962 (LLTSCLFVLLWLLYIFFSSLE). The Extracellular portion of the chain corresponds to 963-970 (AYCHIKGF).

Belongs to the Ca(2+):cation antiporter (CaCA) (TC 2.A.19) family. SLC8 subfamily. As to expression, detected in heart (at protein level). Detected in heart.

It localises to the cell membrane. It carries out the reaction Ca(2+)(in) + 3 Na(+)(out) = Ca(2+)(out) + 3 Na(+)(in). Its activity is regulated as follows. Activated by micromolar levels of Ca(2+). Mediates the exchange of one Ca(2+) ion against three to four Na(+) ions across the cell membrane, and thereby contributes to the regulation of cytoplasmic Ca(2+) levels and Ca(2+)-dependent cellular processes. Contributes to Ca(2+) transport during excitation-contraction coupling in muscle. In a first phase, voltage-gated channels mediate the rapid increase of cytoplasmic Ca(2+) levels due to release of Ca(2+) stores from the endoplasmic reticulum. SLC8A1 mediates the export of Ca(2+) from the cell during the next phase, so that cytoplasmic Ca(2+) levels rapidly return to baseline. Required for normal embryonic heart development and the onset of heart contractions. This Felis catus (Cat) protein is Sodium/calcium exchanger 1 (SLC8A1).